The sequence spans 514 residues: Na(+)/H(+) antiporter NhaB (514 aa).

A run of 12 helical transmembrane segments spans residues 23–43, 52–72, 97–117, 120–140, 144–164, 202–222, 238–258, 303–323, 353–373, 391–411, 447–467, and 475–495; these read LALL…PFIA, IFTL…LLAI, LLLM…LFIF, LLLS…AAAF, FLDA…FYGI, LMMH…VGEP, FFLR…LTCL, ALIG…VGLI, FTAL…QSLF, LFYL…VGTI, ATPN…APLI, and VWMA…CVEF.

It belongs to the NhaB Na(+)/H(+) (TC 2.A.34) antiporter family.

It localises to the cell inner membrane. It carries out the reaction 2 Na(+)(in) + 3 H(+)(out) = 2 Na(+)(out) + 3 H(+)(in). Functionally, na(+)/H(+) antiporter that extrudes sodium in exchange for external protons. This is Na(+)/H(+) antiporter NhaB from Escherichia fergusonii (strain ATCC 35469 / DSM 13698 / CCUG 18766 / IAM 14443 / JCM 21226 / LMG 7866 / NBRC 102419 / NCTC 12128 / CDC 0568-73).